The following is a 243-amino-acid chain: Probable transcriptional regulatory protein Tbd_2215 (243 aa).

The protein belongs to the TACO1 family.

It is found in the cytoplasm. This is Probable transcriptional regulatory protein Tbd_2215 from Thiobacillus denitrificans (strain ATCC 25259 / T1).